We begin with the raw amino-acid sequence, 786 residues long: DNA repair and recombination protein RAD54-like (786 aa).

The segment at 2 to 9 (RRSLAPSQ) is required for chromatin remodeling, strand pairing activities and coupling of ATPase activity. Position 22 is a phosphothreonine (Thr22). The Helicase ATP-binding domain occupies 165 to 340 (EGKRGNFNGC…FSLVNFVNPE (176 aa)). 178–185 (DEMGLGKT) provides a ligand contact to ATP. The short motif at 291–294 (DEGH) is the DEGH box element. The Helicase C-terminal domain maps to 497-654 (LLDFMLAAIR…NNDSAEKHFT (158 aa)). The tract at residues 740–786 (KQPTCITEDNHSEQPQLNSKRNANSVLENDDDEDFDPNSSDEKFLGF) is disordered. A compositionally biased stretch (polar residues) spans 752–766 (EQPQLNSKRNANSVL).

The protein belongs to the SNF2/RAD54 helicase family. In terms of assembly, interacts (via N-terminus) with spn-A/Rad51.

The protein localises to the nucleus. Involved in mitotic DNA repair and meiotic recombination. Functions in the recombinational DNA repair pathway. Essential for interhomolog gene conversion (GC), but may have a less important role in intersister GC than spn-A/Rad51. In the presence of DNA, spn-A/Rad51 enhances the ATPase activity of okr/Rad54. In Drosophila virilis (Fruit fly), this protein is DNA repair and recombination protein RAD54-like.